The following is a 296-amino-acid chain: Formylmethanofuran--tetrahydromethanopterin formyltransferase (296 aa).

This sequence belongs to the FTR family. Homotetramer composed of two dimers. Dimerization is sufficient for enzyme activity, but tetramerization is required for high thermostability.

Its subcellular location is the cytoplasm. The catalysed reaction is N-formylmethanofuran + 5,6,7,8-tetrahydromethanopterin + H(+) = N(5)-formyl-5,6,7,8-tetrahydromethanopterin + methanofuran. It participates in one-carbon metabolism; methanogenesis from CO(2); 5,10-methenyl-5,6,7,8-tetrahydromethanopterin from CO(2): step 2/3. Requires high salt concentrations for activity and thermostability; 1.5-1.8 M KH(2)PO(4) stimulates activity while stabilizing the enzyme. Functionally, catalyzes the reversible transfer of a formyl group from formylmethanofuran (formyl-MFR) to tetrahydromethanopterin (H(4)MPT) to produce 5-formyl tetrahydromethanopterin (5-formyl-H(4)MPT) and methanofuran (MFR). Acts via a ternary-complex mechanism. Uses N-furfurylformamide much less efficiently, does not use N-methylformamide or formamide. Protein overexpressed in E.coli has very similar properties to enzyme purified from M.kandleri. This is Formylmethanofuran--tetrahydromethanopterin formyltransferase from Methanopyrus kandleri (strain AV19 / DSM 6324 / JCM 9639 / NBRC 100938).